The sequence spans 1237 residues: GTPase activating protein BUD2 (1237 aa).

Low complexity predominate over residues 79–110 (GSGKSSISQPPPTTSTRRNLLRKSSNLNSSDQ). The segment at 79 to 124 (GSGKSSISQPPPTTSTRRNLLRKSSNLNSSDQSHSKSSEDNEHQPP) is disordered. A compositionally biased stretch (basic and acidic residues) spans 111 to 121 (SHSKSSEDNEH). In terms of domain architecture, C2 spans 381 to 503 (NVEHPQLYDF…KQIKTTSTIM (123 aa)). The Ras-GAP domain occupies 637–905 (NSQDQAVSNS…PEIYDYFDKL (269 aa)). Disordered regions lie at residues 721–762 (SIHE…ERER) and 969–1007 (NNNGSMSNLGTPVNSPSRDMEREQDRSRSRSQSGTPDLD). Over residues 735 to 754 (DVSDDDDDDDDNSSDDDADY) the composition is skewed to acidic residues. Basic and acidic residues predominate over residues 986 to 996 (RDMEREQDRSR). Positions 1065 to 1093 (NITLKDIQKQSTKIMNKIQELEIYLENYE) form a coiled coil. The segment at 1170–1204 (NGGMGNRNGHDVNGHNNNNNNNNNNTGDGYNETDR) is disordered. Residues 1183-1199 (GHNNNNNNNNNNTGDGY) are compositionally biased toward low complexity.

The protein resides in the cytoplasm. It localises to the cell cortex. It is found in the cell tip. Its subcellular location is the cell septum. Functionally, GTPase activating protein (GAP) for RSR1 which is involved in the polarization of yeast and hyphal cells. Directs the site of new daughter cell growth in yeast and hyphal cells. Important for hyphae to maintain linear growth and necessary for hyphal responses to directional cues in the environment (tropisms). Required for correct localization of the septin rings and stabilization of the polarisome at hyphal tips. Involved in cell adhesion. This is GTPase activating protein BUD2 (BUD2) from Candida albicans (strain SC5314 / ATCC MYA-2876) (Yeast).